Reading from the N-terminus, the 90-residue chain is UPF0512 protein L (90 aa).

It belongs to the UPF0512 family.

The protein is UPF0512 protein L of Dictyostelium discoideum (Social amoeba).